Here is a 292-residue protein sequence, read N- to C-terminus: ATP phosphoribosyltransferase (292 aa).

Belongs to the ATP phosphoribosyltransferase family. Long subfamily. Mg(2+) is required as a cofactor.

It is found in the cytoplasm. It carries out the reaction 1-(5-phospho-beta-D-ribosyl)-ATP + diphosphate = 5-phospho-alpha-D-ribose 1-diphosphate + ATP. It functions in the pathway amino-acid biosynthesis; L-histidine biosynthesis; L-histidine from 5-phospho-alpha-D-ribose 1-diphosphate: step 1/9. Its activity is regulated as follows. Feedback inhibited by histidine. Functionally, catalyzes the condensation of ATP and 5-phosphoribose 1-diphosphate to form N'-(5'-phosphoribosyl)-ATP (PR-ATP). Has a crucial role in the pathway because the rate of histidine biosynthesis seems to be controlled primarily by regulation of HisG enzymatic activity. This chain is ATP phosphoribosyltransferase, found in Gemmatimonas aurantiaca (strain DSM 14586 / JCM 11422 / NBRC 100505 / T-27).